The sequence spans 453 residues: Na(+)/H(+) antiporter NhaA 2 (453 aa).

A run of 11 helical transmembrane segments spans residues 32 to 52, 71 to 91, 109 to 129, 140 to 160, 169 to 189, 193 to 213, 232 to 252, 284 to 304, 310 to 330, 356 to 376, and 382 to 402; these read GALL…PGAA, LSLA…VAGL, AVPI…YVLI, GWAI…AVIG, VFLL…IAVF, NLSV…AILL, ALVH…ALVV, AVPV…GGLV, PVAI…VIAV, MLAG…FAAG, and HVKI…AVIL. Residues 409–453 form a disordered region; sequence GSRGNDATTRDPDQTRVGTATQRTTPDHPTPAATDANQPARSPAP.

It belongs to the NhaA Na(+)/H(+) (TC 2.A.33) antiporter family.

It is found in the cell membrane. The catalysed reaction is Na(+)(in) + 2 H(+)(out) = Na(+)(out) + 2 H(+)(in). Functionally, na(+)/H(+) antiporter that extrudes sodium in exchange for external protons. This is Na(+)/H(+) antiporter NhaA 2 from Salinispora tropica (strain ATCC BAA-916 / DSM 44818 / JCM 13857 / NBRC 105044 / CNB-440).